Consider the following 183-residue polypeptide: Adenine phosphoribosyltransferase (183 aa).

This sequence belongs to the purine/pyrimidine phosphoribosyltransferase family. In terms of assembly, homodimer.

It is found in the cytoplasm. It carries out the reaction AMP + diphosphate = 5-phospho-alpha-D-ribose 1-diphosphate + adenine. It functions in the pathway purine metabolism; AMP biosynthesis via salvage pathway; AMP from adenine: step 1/1. Catalyzes a salvage reaction resulting in the formation of AMP, that is energically less costly than de novo synthesis. This is Adenine phosphoribosyltransferase from Salmonella arizonae (strain ATCC BAA-731 / CDC346-86 / RSK2980).